An 835-amino-acid polypeptide reads, in one-letter code: Serine/threonine-protein kinase TNNI3K (835 aa).

Residues 21–51 are a coiled coil; that stretch reads SESYVITIERLEDDLQIKEKELTELRNIFGS. ANK repeat units lie at residues 66–96, 100–129, 133–162, 166–195, 199–228, 234–263, 269–298, 304–335, 339–368, and 381–410; these read NGLS…RPSR, NGFT…DIQQ, GGLT…NVNI, VFFT…DVNV, VGDR…KADV, EDHV…EVQP, YGDT…TESL, FSET…NINH, DGHT…DMNL, and DEQT…PQDE. A Protein kinase domain is found at 463–723; that stretch reads IEFHEIIGSG…EVVMKLEECL (261 aa). ATP contacts are provided by residues 469–477 and K490; that span reads IGSGSFGKV. The active-site Proton acceptor is D588. Low complexity predominate over residues 732–746; the sequence is ASSNSSGSLSPSSSS. Positions 732–751 are disordered; that stretch reads ASSNSSGSLSPSSSSDCLVN.

The protein belongs to the protein kinase superfamily. TKL Ser/Thr protein kinase family. MAP kinase kinase kinase subfamily. Interacts with TNNI3, ACTC1, ACTA1, MYBPC3, AIP, FABP3 and HADHB. The cofactor is Mg(2+). Post-translationally, autophosphorylated. Highly expressed in both adult and fetal heart.

It is found in the nucleus. Its subcellular location is the cytoplasm. The catalysed reaction is L-seryl-[protein] + ATP = O-phospho-L-seryl-[protein] + ADP + H(+). It catalyses the reaction L-threonyl-[protein] + ATP = O-phospho-L-threonyl-[protein] + ADP + H(+). Its function is as follows. May play a role in cardiac physiology. The polypeptide is Serine/threonine-protein kinase TNNI3K (Homo sapiens (Human)).